A 191-amino-acid chain; its full sequence is Calcium-activated potassium channel subunit beta-1 (191 aa).

Residues M1–C18 lie on the Cytoplasmic side of the membrane. The chain crosses the membrane as a helical span at residues L19–L39. Residues P40–Q155 are Extracellular-facing. N-linked (GlcNAc...) asparagine glycans are attached at residues N80 and N142. The chain crosses the membrane as a helical span at residues I156 to A176. The Cytoplasmic portion of the chain corresponds to M177–K191.

The protein belongs to the KCNMB (TC 8.A.14.1) family. KCNMB1 subfamily. Interacts with KCNMA1 tetramer. There are probably 4 molecules of KCMNB1 per KCNMA1 tetramer. In terms of processing, N-glycosylated. Weakly expressed. In brain, it is expressed in a few discrete populations of neurons that also express KCNMA1.

It localises to the membrane. Functionally, regulatory subunit of the calcium activated potassium KCNMA1 (maxiK) channel. Modulates the calcium sensitivity and gating kinetics of KCNMA1, thereby contributing to KCNMA1 channel diversity. Increases the apparent Ca(2+)/voltage sensitivity of the KCNMA1 channel. It also modifies KCNMA1 channel kinetics and alters its pharmacological properties. It slows down the activation and the deactivation kinetics of the channel. Acts as a negative regulator of smooth muscle contraction by enhancing the calcium sensitivity to KCNMA1. Its presence is also a requirement for internal binding of the KCNMA1 channel opener dehydrosoyasaponin I (DHS-1) triterpene glycoside and for external binding of the agonist hormone 17-beta-estradiol (E2). Increases the binding activity of charybdotoxin (CTX) toxin to KCNMA1 peptide blocker by increasing the CTX association rate and decreasing the dissociation rate. This chain is Calcium-activated potassium channel subunit beta-1 (Kcnmb1), found in Rattus norvegicus (Rat).